A 335-amino-acid polypeptide reads, in one-letter code: Protein-arginine N-acetylglucosaminyltransferase SseK3 (335 aa).

UDP-N-acetyl-alpha-D-glucosamine contacts are provided by residues 51 to 53 (QWF) and Tyr-75. Residues Arg-153 and Arg-184 are each glycosylated (N-beta-linked (GlcNAc) arginine; by autocatalysis). 224-227 (YLDA) serves as a coordination point for UDP-N-acetyl-alpha-D-glucosamine. A DXD motif motif is present at residues 226–228 (DAD). Mn(2+) is bound at residue Asp-228. The Proton acceptor role is filled by Glu-258. Arg-305 is a glycosylation site (N-beta-linked (GlcNAc) arginine; by autocatalysis). 2 residues coordinate Mn(2+): Asp-325 and Ser-327. Residues Ser-327 and 332 to 335 (SSWR) contribute to the UDP-N-acetyl-alpha-D-glucosamine site. Arg-335 is a glycosylation site (N-beta-linked (GlcNAc) arginine; by autocatalysis).

It belongs to the glycosyltransferase NleB family. As to quaternary structure, interacts with host TRIM32; without mediating its GlcNAcylation. The cofactor is Mn(2+). Auto-glycosylated: arginine GlcNAcylation is required for activity toward death domain-containing host target proteins.

The protein localises to the secreted. The protein resides in the host Golgi apparatus. It catalyses the reaction L-arginyl-[protein] + UDP-N-acetyl-alpha-D-glucosamine = N(omega)-(N-acetyl-beta-D-glucosaminyl)-L-arginyl-[protein] + UDP + H(+). Functionally, protein-arginine N-acetylglucosaminyltransferase effector that disrupts TNF signaling in infected cells, including NF-kappa-B signaling and apoptosis. Acts by catalyzing the transfer of a single N-acetylglucosamine (GlcNAc) to a conserved arginine residue in the death domain of host proteins such as TRADD, TNFRSF1A/TNFR1 and TNFRSF10B/TRAILR2: arginine GlcNAcylation prevents homotypic/heterotypic death domain interactions and assembly of the oligomeric TNF-alpha receptor complex, thereby disrupting TNF signaling. Also acts on host proteins without a death domain: catalyzes arginine GlcNAcylation of host small Rab GTPase (Rab1, Rab5 and Rab11), thereby preventing GTPase activity and leading to impaired host vesicular protein transport. Also mediates auto-GlcNAcylation, which is required for activity toward death domain-containing host target proteins. The protein is Protein-arginine N-acetylglucosaminyltransferase SseK3 of Salmonella typhimurium (strain SL1344).